The chain runs to 471 residues: Adenosylhomocysteinase (471 aa).

Substrate-binding residues include T60, D135, and E196. Position 197–199 (197–199 (TTT)) interacts with NAD(+). Substrate is bound by residues K226 and D230. Residues N231, 260-265 (GYGDVG), E283, N318, 339-341 (IGH), and N387 each bind NAD(+).

The protein belongs to the adenosylhomocysteinase family. It depends on NAD(+) as a cofactor.

The protein localises to the cytoplasm. It carries out the reaction S-adenosyl-L-homocysteine + H2O = L-homocysteine + adenosine. The protein operates within amino-acid biosynthesis; L-homocysteine biosynthesis; L-homocysteine from S-adenosyl-L-homocysteine: step 1/1. In terms of biological role, may play a key role in the regulation of the intracellular concentration of adenosylhomocysteine. This Chlorobium luteolum (strain DSM 273 / BCRC 81028 / 2530) (Pelodictyon luteolum) protein is Adenosylhomocysteinase.